We begin with the raw amino-acid sequence, 204 residues long: Glycerol-3-phosphate acyltransferase (204 aa).

5 helical membrane passes run 8–28 (ILIFAYLLGSINSAIIVCYIF), 53–73 (VPAAITLIFDILKGLVPVVIA), 81–101 (FITACTALYAILGHIFPIFFG), 116–136 (FGFSWILGLIFVITWLCVAII), and 155–175 (VIFTSDLQVAAPFLIIAIIIL).

This sequence belongs to the PlsY family. Probably interacts with PlsX.

The protein resides in the cell inner membrane. The enzyme catalyses an acyl phosphate + sn-glycerol 3-phosphate = a 1-acyl-sn-glycero-3-phosphate + phosphate. It functions in the pathway lipid metabolism; phospholipid metabolism. In terms of biological role, catalyzes the transfer of an acyl group from acyl-phosphate (acyl-PO(4)) to glycerol-3-phosphate (G3P) to form lysophosphatidic acid (LPA). This enzyme utilizes acyl-phosphate as fatty acyl donor, but not acyl-CoA or acyl-ACP. This chain is Glycerol-3-phosphate acyltransferase, found in Francisella tularensis subsp. mediasiatica (strain FSC147).